Here is a 328-residue protein sequence, read N- to C-terminus: Glucokinase (328 aa).

Residue Ala16–Thr21 participates in ATP binding.

It belongs to the bacterial glucokinase family.

The protein resides in the cytoplasm. It catalyses the reaction D-glucose + ATP = D-glucose 6-phosphate + ADP + H(+). This is Glucokinase from Neisseria meningitidis serogroup C (strain 053442).